Consider the following 301-residue polypeptide: t-SNARE affecting a late Golgi compartment protein 2 (301 aa).

Over 1-279 the chain is Cytoplasmic; sequence MAYRDRTGLY…SHQKNTGRLR (279 aa). The stretch at 92–120 forms a coiled coil; it reads SDKTEQENEIQRLTIQITQDFQRCQKLLQ. One can recognise a t-SNARE coiled-coil homology domain in the interval 206-268; it reads DEQAIRHERA…KSAEKELIKA (63 aa). The helical; Anchor for type IV membrane protein transmembrane segment at 280-300 threads the bilayer; that stretch reads FICFLILLIVALIVILAIKLL. A topological domain (vesicular) is located at residue Arg301.

It belongs to the syntaxin family.

It is found in the golgi apparatus. It localises to the trans-Golgi network membrane. The protein resides in the endosome membrane. In terms of biological role, t-SNARE that functions in transport from the endosome to the late Golgi and on the endocytic pathway. The chain is t-SNARE affecting a late Golgi compartment protein 2 (tlg2) from Schizosaccharomyces pombe (strain 972 / ATCC 24843) (Fission yeast).